A 187-amino-acid polypeptide reads, in one-letter code: Large ribosomal subunit protein uL5 (187 aa).

The protein belongs to the universal ribosomal protein uL5 family. As to quaternary structure, part of the 50S ribosomal subunit; part of the 5S rRNA/L5/L18/L25 subcomplex. Contacts the 5S rRNA and the P site tRNA. Forms a bridge to the 30S subunit in the 70S ribosome.

Functionally, this is one of the proteins that bind and probably mediate the attachment of the 5S RNA into the large ribosomal subunit, where it forms part of the central protuberance. In the 70S ribosome it contacts protein S13 of the 30S subunit (bridge B1b), connecting the 2 subunits; this bridge is implicated in subunit movement. Contacts the P site tRNA; the 5S rRNA and some of its associated proteins might help stabilize positioning of ribosome-bound tRNAs. In Mycobacterium sp. (strain JLS), this protein is Large ribosomal subunit protein uL5.